Reading from the N-terminus, the 520-residue chain is Cytosol aminopeptidase (520 aa).

Positions 286 and 291 each coordinate Zn(2+). The active site involves Lys-298. Zn(2+)-binding residues include Asp-309, Asp-368, and Glu-370. The active site involves Arg-372.

It belongs to the peptidase M17 family. Homohexamer. The cofactor is Zn(2+).

The protein resides in the cytoplasm. It catalyses the reaction Release of an N-terminal amino acid, Xaa-|-Yaa-, in which Xaa is preferably Leu, but may be other amino acids including Pro although not Arg or Lys, and Yaa may be Pro. Amino acid amides and methyl esters are also readily hydrolyzed, but rates on arylamides are exceedingly low.. The enzyme catalyses Release of N-terminal proline from a peptide.. Presumably involved in the processing and regular turnover of intracellular proteins. Catalyzes the removal of unsubstituted N-terminal amino acids from various peptides. This is Cytosol aminopeptidase (lap) from Dictyostelium discoideum (Social amoeba).